The primary structure comprises 528 residues: DnaJ homolog 1, mitochondrial (528 aa).

A mitochondrion-targeting transit peptide spans 1–66; it reads MFSKYLQSRV…REFSRCAALK (66 aa). A J domain is found at 86–150; it reads DPYKTLGVSK…KKKKAFDTYG (65 aa). The CR-type zinc finger occupies 227-308; it reads GAKKDLSYSV…CMGSGTVRER (82 aa). CXXCXGXG motif repeat units follow at residues 240 to 247, 257 to 264, 280 to 287, and 296 to 303; these read CSSCHGSG, CFACKGTG, CDSCGGTG, and CRSCMGSG. A disordered region spans residues 455-528; the sequence is NDSTARRTQS…QNPKKDESSS (74 aa). Residues 462-488 are compositionally biased toward low complexity; sequence TQSSPSGTNSSTSTSSTSSKHSTGIST. Basic and acidic residues predominate over residues 513-528; the sequence is LHPDEDQNPKKDESSS.

The protein localises to the mitochondrion. The chain is DnaJ homolog 1, mitochondrial (mdj1) from Schizosaccharomyces pombe (strain 972 / ATCC 24843) (Fission yeast).